The primary structure comprises 212 residues: External core antigen (212 aa).

The first 19 residues, 1–19, serve as a signal peptide directing secretion; that stretch reads MQLFHLCLIISCSCPTVQA. Residues 25–27 are HBEAG; it reads GWL. The disordered stretch occupies residues 165 to 212; sequence NAPILSTLPETTVVRRRGRSPRRRTPSPRRRRSQSPRRRRSQSRESQC. The segment covering 178 to 205 has biased composition (basic residues); the sequence is VRRRGRSPRRRTPSPRRRRSQSPRRRRS. The stretch at 184–190 is one 1; half-length repeat; the sequence is SPRRRTP. Residues 184-206 form a 3 X 8 AA repeats of S-P-R-R-R-R-S-Q region; it reads SPRRRTPSPRRRRSQSPRRRRSQ. Positions 184–212 are excised as a propeptide; sequence SPRRRTPSPRRRRSQSPRRRRSQSRESQC. A run of 2 repeats spans residues 191–198 and 199–206.

It belongs to the orthohepadnavirus precore antigen family. As to quaternary structure, homodimerizes. Phosphorylated. Post-translationally, cleaved by host furin.

The protein resides in the secreted. It localises to the host nucleus. Its function is as follows. May regulate immune response to the intracellular capsid in acting as a T-cell tolerogen, by having an immunoregulatory effect which prevents destruction of infected cells by cytotoxic T-cells. This immune regulation may predispose to chronicity during perinatal infections and prevent severe liver injury during adult infections. This is External core antigen from Homo sapiens (Human).